The primary structure comprises 28 residues: AVWKDFLKNIGKAAGKAVLNSVTDMVNE.

Expressed by the skin glands.

It is found in the secreted. Functionally, probable antimicrobial peptide which stimulates insulin-release in glucose-responsive BRIN-BD 11 cells. The polypeptide is Dermaseptin-SP1 (Agalychnis spurrelli (Gliding leaf frog)).